The chain runs to 81 residues: Three-finger toxin 3FTx-Oxy6 (81 aa).

Residues 1–21 (MKTLLLSLVVMTIVYLDLGYT) form the signal peptide. Disulfide bonds link C24–C43, C36–C61, C65–C73, and C74–C79.

The protein belongs to the three-finger toxin family. Short-chain subfamily. In terms of tissue distribution, expressed by the venom gland.

It is found in the secreted. This Oxyuranus microlepidotus (Inland taipan) protein is Three-finger toxin 3FTx-Oxy6.